We begin with the raw amino-acid sequence, 262 residues long: High-affinity zinc uptake system membrane protein ZnuB (262 aa).

7 helical membrane-spanning segments follow: residues glycine 8–tryptophan 28, isoleucine 54–leucine 74, threonine 84–isoleucine 104, isoleucine 129–isoleucine 149, phenylalanine 179–isoleucine 199, valine 215–phenylalanine 235, and threonine 238–isoleucine 254.

This sequence belongs to the ABC-3 integral membrane protein family.

Its subcellular location is the cell membrane. Its function is as follows. Involved in the high-affinity zinc uptake transport system. In Buchnera aphidicola subsp. Acyrthosiphon pisum (strain APS) (Acyrthosiphon pisum symbiotic bacterium), this protein is High-affinity zinc uptake system membrane protein ZnuB (znuB).